A 313-amino-acid polypeptide reads, in one-letter code: MTLKVAVQMDPIARINIRGDSTFALLLEAQARGHAISYFTPDKLSLRGNDVVASVQSLKVRDQEGDHFTLGEPARVDMRSYDVVLLRQDPPFDLAYITSTHLLERIHPATLVVNNPASVRNAPEKLFVMDFTELMPPTLISRDKDEINAFRAEHGAVVMKPLHGHGGAAVFRVLPQDINFGSLYDMFAVTFREPWVIQRFLPEVKHGDKRIILVDGEFAGAVNRVPAEDDLRSNMVRGGAAAATELSPREREICATLGPKLRERGLLFVGIDVIDGYLTEINVTSPTGIRAVARLGGPDIAAKIWDVIEAKRA.

The region spanning 125-309 (KLFVMDFTEL…IAAKIWDVIE (185 aa)) is the ATP-grasp domain. 151 to 207 (RAEHGAVVMKPLHGHGGAAVFRVLPQDINFGSLYDMFAVTFREPWVIQRFLPEVKHG) lines the ATP pocket. Mg(2+) contacts are provided by glutamate 280 and asparagine 282.

The protein belongs to the prokaryotic GSH synthase family. Requires Mg(2+) as cofactor. The cofactor is Mn(2+).

It catalyses the reaction gamma-L-glutamyl-L-cysteine + glycine + ATP = glutathione + ADP + phosphate + H(+). It functions in the pathway sulfur metabolism; glutathione biosynthesis; glutathione from L-cysteine and L-glutamate: step 2/2. This chain is Glutathione synthetase, found in Rhodopseudomonas palustris (strain ATCC BAA-98 / CGA009).